The primary structure comprises 244 residues: Troponin I, cardiac muscle (244 aa).

Residues 1–25 are compositionally biased toward acidic residues; the sequence is MSDEEEVTYEEEEEEYVEEEEEEVV. Positions 1 to 67 are disordered; that stretch reads MSDEEEVTYE…PQVKRKPKIS (67 aa). Position 2 is an N-acetylserine (S2). S2 is subject to Phosphoserine; by CK2. Over residues 27-42 the composition is skewed to pro residues; that stretch reads PEPPKPAPPPAAPPPL.

This sequence belongs to the troponin I family. In terms of assembly, binds to actin and tropomyosin. In terms of tissue distribution, heart.

In terms of biological role, troponin I is the inhibitory subunit of troponin, the thin filament regulatory complex which confers calcium-sensitivity to striated muscle actomyosin ATPase activity. This chain is Troponin I, cardiac muscle (tnni3), found in Xenopus laevis (African clawed frog).